A 627-amino-acid chain; its full sequence is UvrABC system protein C (627 aa).

A GIY-YIG domain is found at 22 to 100 (NNPGVYRMFN…IKRLRPRFNV (79 aa)). One can recognise a UVR domain in the interval 210–245 (QSVKDHLAAAMQAASADLDFEHAAVYRDRLAALSHV).

The protein belongs to the UvrC family. Interacts with UvrB in an incision complex.

The protein localises to the cytoplasm. Its function is as follows. The UvrABC repair system catalyzes the recognition and processing of DNA lesions. UvrC both incises the 5' and 3' sides of the lesion. The N-terminal half is responsible for the 3' incision and the C-terminal half is responsible for the 5' incision. The sequence is that of UvrABC system protein C from Brucella abortus biovar 1 (strain 9-941).